Here is a 396-residue protein sequence, read N- to C-terminus: NADH-quinone oxidoreductase subunit D (396 aa).

Belongs to the complex I 49 kDa subunit family. NDH-1 is composed of 14 different subunits. Subunits NuoB, C, D, E, F, and G constitute the peripheral sector of the complex.

It localises to the cell inner membrane. The enzyme catalyses a quinone + NADH + 5 H(+)(in) = a quinol + NAD(+) + 4 H(+)(out). Its function is as follows. NDH-1 shuttles electrons from NADH, via FMN and iron-sulfur (Fe-S) centers, to quinones in the respiratory chain. The immediate electron acceptor for the enzyme in this species is believed to be ubiquinone. Couples the redox reaction to proton translocation (for every two electrons transferred, four hydrogen ions are translocated across the cytoplasmic membrane), and thus conserves the redox energy in a proton gradient. In Brucella suis biovar 1 (strain 1330), this protein is NADH-quinone oxidoreductase subunit D.